The primary structure comprises 303 residues: Hemolysin C (303 aa).

CBS domains are found at residues 81-143 (MVPR…NSPL) and 146-203 (LIRK…IDDE).

This sequence belongs to the UPF0053 family. Hemolysin C subfamily.

This is Hemolysin C (tlyC) from Rickettsia prowazekii (strain Madrid E).